The sequence spans 251 residues: Hydroxyacylglutathione hydrolase (251 aa).

Zn(2+) is bound by residues His53, His55, Asp57, His58, His110, Asp127, and His165.

It belongs to the metallo-beta-lactamase superfamily. Glyoxalase II family. As to quaternary structure, monomer. Zn(2+) is required as a cofactor.

The catalysed reaction is an S-(2-hydroxyacyl)glutathione + H2O = a 2-hydroxy carboxylate + glutathione + H(+). It participates in secondary metabolite metabolism; methylglyoxal degradation; (R)-lactate from methylglyoxal: step 2/2. Thiolesterase that catalyzes the hydrolysis of S-D-lactoyl-glutathione to form glutathione and D-lactic acid. This is Hydroxyacylglutathione hydrolase from Escherichia coli (strain UTI89 / UPEC).